We begin with the raw amino-acid sequence, 886 residues long: Receptor-like kinase TMK2 (886 aa).

The N-terminal stretch at 1–20 is a signal peptide; it reads MIAKNFLLLLCFIALVNVES. Residues 21–460 lie on the Extracellular side of the membrane; that stretch reads SPDEAVMIAL…GKKASSNAGK (440 aa). N-linked (GlcNAc...) asparagine glycosylation occurs at asparagine 41. Residues cysteine 48 and cysteine 56 are joined by a disulfide bond. LRR repeat units lie at residues 59 to 83, 84 to 106, 107 to 129, 131 to 155, 157 to 179, 182 to 206, 208 to 232, 233 to 254, 255 to 279, and 281 to 302; these read SNRV…LGKL, TSLT…LAGL, KSLV…FFSG, SSLQ…LENA, SLVD…LFEG, FSSL…FSDS, VQVL…LQKM, TSLT…DFSG, LVSL…LFEL, and SLSD…FTAP. Residues asparagine 154, asparagine 167, and asparagine 202 are each glycosylated (N-linked (GlcNAc...) asparagine). Asparagine 237 carries N-linked (GlcNAc...) asparagine glycosylation. A glycan (N-linked (GlcNAc...) asparagine) is linked at asparagine 298. Cystine bridges form between cysteine 315–cysteine 323 and cysteine 353–cysteine 361. LRR repeat units follow at residues 363 to 386, 387 to 410, and 411 to 438; these read GTDI…RFAD, FASL…ELAK, and LSNL…IVNT. 5 N-linked (GlcNAc...) asparagine glycosylation sites follow: asparagine 377, asparagine 394, asparagine 401, asparagine 432, and asparagine 437. A helical membrane pass occupies residues 461–481; sequence IVGSVIGILLALLLIGVAIFF. Residues 482-886 are Cytoplasmic-facing; sequence LVKKKMQYHK…ESTFKSGQGR (405 aa). Positions 547-827 constitute a Protein kinase domain; the sequence is FDEKNILGRG…HVVNVLVSLV (281 aa). Residues 553-561 and lysine 575 each bind ATP; that span reads LGRGGFGIV. Aspartate 676 acts as the Proton acceptor in catalysis.

Belongs to the protein kinase superfamily. Ser/Thr protein kinase family. As to expression, expressed in siliques and flowers.

The protein resides in the membrane. It carries out the reaction L-seryl-[protein] + ATP = O-phospho-L-seryl-[protein] + ADP + H(+). The enzyme catalyses L-threonyl-[protein] + ATP = O-phospho-L-threonyl-[protein] + ADP + H(+). Functionally, involved in auxin signal transduction and cell expansion and proliferation regulation. This Arabidopsis thaliana (Mouse-ear cress) protein is Receptor-like kinase TMK2.